We begin with the raw amino-acid sequence, 208 residues long: MSSQYSNVENLSPQTIRQVMKELQDMESTPPEGIKVLINESDVTDIQALIDGPAGTPYAVGIFRVKLTLSKDFPQTPPKAYFLTKIFHPNVASNGEICVNTLKKDWKPDLGIKHILLTIKCLLIVPNPESALNEEAGKMLLERYDDYSQRARMMTEIHAQPAKCGAGASDAKDDDGPSTKKHAGVDKKLQDKKKEKLLKEKKRMLKRL.

Residues 14–160 enclose the UBC core domain; that stretch reads QTIRQVMKEL…ARMMTEIHAQ (147 aa). Cys98 (glycyl thioester intermediate) is an active-site residue. The segment at 161-196 is disordered; the sequence is PAKCGAGASDAKDDDGPSTKKHAGVDKKLQDKKKEK. The segment covering 170–196 has biased composition (basic and acidic residues); it reads DAKDDDGPSTKKHAGVDKKLQDKKKEK.

It belongs to the ubiquitin-conjugating enzyme family.

It catalyses the reaction S-ubiquitinyl-[E1 ubiquitin-activating enzyme]-L-cysteine + [E2 ubiquitin-conjugating enzyme]-L-cysteine = [E1 ubiquitin-activating enzyme]-L-cysteine + S-ubiquitinyl-[E2 ubiquitin-conjugating enzyme]-L-cysteine.. It participates in protein modification; protein ubiquitination. Functionally, catalyzes the covalent attachment of ubiquitin to other proteins. Acts as an essential factor of the anaphase promoting complex/cyclosome (APC/C), a cell cycle-regulated ubiquitin ligase that controls progression through mitosis. Acts by specifically elongating polyubiquitin chains initiated by the E2 enzyme vih/UbcH10 on APC/C substrates, enhancing the degradation of APC/C substrates by the proteasome and promoting mitotic exit. This Drosophila grimshawi (Hawaiian fruit fly) protein is Ubiquitin-conjugating enzyme E2 S.